A 922-amino-acid chain; its full sequence is MSDLAREITPINIEEELKSSYLDYAMSVIVGRALPDVRDGLKPVHRRVLFAMNELGNDWNKPYKKSARVVGDVIGKYHPHGDSAVYDTIVRLAQDFSMRYMLVDGQGNFGSVDGDSAAAMRYTEVRMARISHELLADLDKETVDWVPNYDGTEMIPAVMPTKVPNLLVNGSSGIAVGMAWNIPPHNLTEIVNGCLALIENGNLTIDELMTYITGPDFPTGAIINGRAGIVQAYRTGRGSVYVRAKAEVEVDDKTSRETIIIVHELPYQVNKARLIEKIAELVKEKKVEGISALRDESDKDACRIVIEIKRGESGEIVLNNLYKHTQLQTTFGINMVALDNNQPKVMNLKDILDAFLLHRREVVTRRTVFELRKARDRAHILEGLAVALANIDPIIELIRHSDTPADAKAKLVARGWELGNVAAMLEKAGDDAARPEWLEPEFGIREGQYFLTEQQAQAILDLRLHKLTGLEHGKILEEYQSLLDLIAELLFILASPERLMEVIRDELLAVREQYGDERPPEISASSAEINIEDLITPEDVVVTLSHQGYVKYQPITDYEAQRRGGRGKSATRIKEENFVERLLVANTHDTILCFSTRGKVYWLKVYQLPEASRGARGRPIINLLPLEEGERITAILPVKEYADDKYVFFATADGTVKKTSLSAFSRPLSSGIRAINLKEGDELIGVDITDGSNEIMLFSDAGKVVRFNEGSAAPMQPMLMSSDDVDGDDESVIDAGNDDDGSDNGEGSESTESKGTFKGVRPMGRTAGGVRGIRLLNGDKVVSLIVPRGEGAILTATENGYGKGTALTEYPTKSRGTQGVRSIKVDEDGKVSIDQVDDTDQIMLITNGGTLVRTRVSEVSIIGRNTGGVRLIRTGEDETVVGLQRIAESYEEENDVMAIDGEVSEGTDTAPDAGSAAADPEE.

The region spanning 34–534 (LPDVRDGLKP…SSAEINIEDL (501 aa)) is the Topo IIA-type catalytic domain. Residue Tyr-122 is the O-(5'-phospho-DNA)-tyrosine intermediate of the active site. The GyrA-box signature appears at 561–567 (QRRGGRG). 2 disordered regions span residues 715-763 (MQPM…VRPM) and 899-922 (IDGE…DPEE). The span at 723-743 (DDVDGDDESVIDAGNDDDGSD) shows a compositional bias: acidic residues.

Belongs to the type II topoisomerase GyrA/ParC subunit family. Heterotetramer, composed of two GyrA and two GyrB chains. In the heterotetramer, GyrA contains the active site tyrosine that forms a transient covalent intermediate with DNA, while GyrB binds cofactors and catalyzes ATP hydrolysis.

Its subcellular location is the cytoplasm. The catalysed reaction is ATP-dependent breakage, passage and rejoining of double-stranded DNA.. Its function is as follows. A type II topoisomerase that negatively supercoils closed circular double-stranded (ds) DNA in an ATP-dependent manner to modulate DNA topology and maintain chromosomes in an underwound state. Negative supercoiling favors strand separation, and DNA replication, transcription, recombination and repair, all of which involve strand separation. Also able to catalyze the interconversion of other topological isomers of dsDNA rings, including catenanes and knotted rings. Type II topoisomerases break and join 2 DNA strands simultaneously in an ATP-dependent manner. The sequence is that of DNA gyrase subunit A from Aeromonas salmonicida.